The primary structure comprises 393 residues: Cysteine protease ATG4B (393 aa).

M1 bears the N-acetylmethionine mark. S34 bears the Phosphoserine mark. Residue C74 is the Nucleophile of the active site. C189 bears the S-nitrosocysteine mark. Catalysis depends on residues D278 and H280. An S-nitrosocysteine mark is found at C292 and C301. Residues C292 and C361 are joined by a disulfide bond. Phosphoserine occurs at positions 316 and 383. The LIR signature appears at 388 to 391; the sequence is FEIL. S392 is subject to Phosphoserine.

The protein belongs to the peptidase C54 family. As to quaternary structure, interacts with PFKP; promoting phosphorylation of ATG4B at Ser-34. Interacts with GBP7. Post-translationally, phosphorylation at Ser-383 and Ser-392 promotes autophagy by increasing protein delipidation activity without affecting proteolytic activation of ATG8 proteins. Phosphorylation at Ser-316 by ULK1 inhibits autophagy by decreasing both proteolytic activation and delipidation activities. Phosphorylation at Ser-316 is dephosphorylated by protein phosphatase 2A (PP2A). Phosphorylation at Ser-34 by AKT2 promotes its hydrolase activity, leading to increased proteolytic activation and delipidation of ATG8 family proteins. Phosphorylation at Ser-34 by AKT1 promotes mitochondrial localization and inhibition of the F1F0-ATP synthase activity, leading to elevation of mitochondrial reactive oxygen species (ROS). Ubiquitinated by RNF5, leading to its degradation by the proteasome. In terms of processing, S-nitrosylation in response to high glucose decreases both proteolytic activation and delipidation activities. Post-translationally, O-glycosylated by OGT, leading to increase protease activity, thereby promoting the proteolytic activation of ATG8 family proteins. Forms reversible intrachain disulfide bonds in response to oxidative stress. Forms interchain disulfide bonds, leading to formation of homooligomers in response to oxidation.

It localises to the cytoplasm. The protein resides in the cytosol. It is found in the cytoplasmic vesicle. The protein localises to the autophagosome. Its subcellular location is the endoplasmic reticulum. It localises to the mitochondrion. The enzyme catalyses [protein]-C-terminal L-amino acid-glycyl-phosphatidylethanolamide + H2O = [protein]-C-terminal L-amino acid-glycine + a 1,2-diacyl-sn-glycero-3-phosphoethanolamine. It carries out the reaction [protein]-C-terminal L-amino acid-glycyl-phosphatidylserine + H2O = [protein]-C-terminal L-amino acid-glycine + a 1,2-diacyl-sn-glycero-3-phospho-L-serine. Its activity is regulated as follows. Inhibited by N-ethylmaleimide. Redox-regulated during autophagy since reducing conditions activate ATG4A whereas an oxidizing environment such as the presence of H(2)O(2) inhibits its activity. The cysteine protease activity compounds is inhibited by styrylquinoline compounds 4-28 and LV-320. Its function is as follows. Cysteine protease that plays a key role in autophagy by mediating both proteolytic activation and delipidation of ATG8 family proteins. Required for canonical autophagy (macroautophagy), non-canonical autophagy as well as for mitophagy. The protease activity is required for proteolytic activation of ATG8 family proteins: cleaves the C-terminal amino acid of ATG8 proteins MAP1LC3A, MAP1LC3B, MAP1LC3C, GABARAPL1, GABARAPL2 and GABARAP, to reveal a C-terminal glycine. Exposure of the glycine at the C-terminus is essential for ATG8 proteins conjugation to phosphatidylethanolamine (PE) and insertion to membranes, which is necessary for autophagy. Protease activity is also required to counteract formation of high-molecular weight conjugates of ATG8 proteins (ATG8ylation): acts as a deubiquitinating-like enzyme that removes ATG8 conjugated to other proteins, such as ATG3. In addition to the protease activity, also mediates delipidation of ATG8 family proteins. Catalyzes delipidation of PE-conjugated forms of ATG8 proteins during macroautophagy. Also involved in non-canonical autophagy, a parallel pathway involving conjugation of ATG8 proteins to single membranes at endolysosomal compartments, by catalyzing delipidation of ATG8 proteins conjugated to phosphatidylserine (PS). Compared to other members of the family (ATG4A, ATG4C or ATG4C), constitutes the major protein for proteolytic activation of ATG8 proteins, while it displays weaker delipidation activity than other ATG4 paralogs. Involved in phagophore growth during mitophagy independently of its protease activity and of ATG8 proteins: acts by regulating ATG9A trafficking to mitochondria and promoting phagophore-endoplasmic reticulum contacts during the lipid transfer phase of mitophagy. The polypeptide is Cysteine protease ATG4B (Rattus norvegicus (Rat)).